Reading from the N-terminus, the 153-residue chain is Endoribonuclease YbeY (153 aa).

3 residues coordinate Zn(2+): His113, His117, and His123.

It belongs to the endoribonuclease YbeY family. Zn(2+) is required as a cofactor.

It is found in the cytoplasm. In terms of biological role, single strand-specific metallo-endoribonuclease involved in late-stage 70S ribosome quality control and in maturation of the 3' terminus of the 16S rRNA. The protein is Endoribonuclease YbeY of Aliivibrio fischeri (strain MJ11) (Vibrio fischeri).